We begin with the raw amino-acid sequence, 243 residues long: Small ribosomal subunit protein uS5 (243 aa).

2 stretches are compositionally biased toward basic and acidic residues: residues 1-21 (MPIDKKQEKNFTNKIQEEGQK) and 34-46 (LEEKLNKNPDHKG). Residues 1–85 (MPIDKKQEKN…NFKKNANKKP (85 aa)) form a disordered region. In terms of domain architecture, S5 DRBM spans 89 to 152 (FEEKIVNIAR…KDAQNNLIRV (64 aa)).

It belongs to the universal ribosomal protein uS5 family. Part of the 30S ribosomal subunit. Contacts proteins S4 and S8.

Its function is as follows. With S4 and S12 plays an important role in translational accuracy. Located at the back of the 30S subunit body where it stabilizes the conformation of the head with respect to the body. This Mycoplasma mobile (strain ATCC 43663 / 163K / NCTC 11711) (Mesomycoplasma mobile) protein is Small ribosomal subunit protein uS5.